Consider the following 131-residue polypeptide: Plastocyanin (131 aa).

The N-terminal stretch at 1-34 (MKFFASLSKRFAPVLSLVVLVAGTLLLSAAPASA) is a signal peptide. The Plastocyanin-like domain maps to 35–131 (ATVQIKMGTD…AGMVGTITVE (97 aa)). Residues His-73, Cys-116, His-119, and Met-124 each contribute to the Cu cation site.

It belongs to the plastocyanin family. Cu(2+) serves as cofactor.

The protein localises to the cellular thylakoid membrane. In terms of biological role, participates in electron transfer between P700 and the cytochrome b6-f complex in photosystem I. The protein is Plastocyanin (petE) of Prochlorothrix hollandica.